The sequence spans 425 residues: 1,4-beta-D-glucan glucohydrolase (425 aa).

Glu-164 acts as the Proton donor in catalysis. Glu-349 acts as the Nucleophile in catalysis.

It belongs to the glycosyl hydrolase 1 family. As to quaternary structure, monomer.

It catalyses the reaction Hydrolysis of (1-&gt;4)-linkages in (1-&gt;4)-beta-D-glucans, to remove successive glucose units.. It carries out the reaction Hydrolysis of terminal, non-reducing beta-D-glucosyl residues with release of beta-D-glucose.. Its pathway is glycan metabolism; cellulose degradation. It functions in the pathway glycan metabolism; beta-D-glucan degradation. Its function is as follows. Broad substrate specificity glycosidase. Releases glucose from soluble glucooligomers, with a preference for longer oligomers; acts more readily on cellotetraose than on cellobiose. Displays similar activities towards the disaccharides lactose and cellobiose. Is also able to hydrolyze various aryl-beta-glycosides in vitro. The polypeptide is 1,4-beta-D-glucan glucohydrolase (bglA) (Thermotoga neapolitana).